The chain runs to 403 residues: Dual-specificity RNA methyltransferase RlmN (403 aa).

The Proton acceptor role is filled by E126. The region spanning 132-375 (ETDRGTLCVS…VRTPRGRDIL (244 aa)) is the Radical SAM core domain. A disulfide bridge connects residues C139 and C378. The [4Fe-4S] cluster site is built by C146, C150, and C153. Residues 204-205 (GE), S236, 258-260 (SLH), and N335 each bind S-adenosyl-L-methionine. The S-methylcysteine intermediate role is filled by C378.

This sequence belongs to the radical SAM superfamily. RlmN family. [4Fe-4S] cluster is required as a cofactor.

Its subcellular location is the cytoplasm. It catalyses the reaction adenosine(2503) in 23S rRNA + 2 reduced [2Fe-2S]-[ferredoxin] + 2 S-adenosyl-L-methionine = 2-methyladenosine(2503) in 23S rRNA + 5'-deoxyadenosine + L-methionine + 2 oxidized [2Fe-2S]-[ferredoxin] + S-adenosyl-L-homocysteine. It carries out the reaction adenosine(37) in tRNA + 2 reduced [2Fe-2S]-[ferredoxin] + 2 S-adenosyl-L-methionine = 2-methyladenosine(37) in tRNA + 5'-deoxyadenosine + L-methionine + 2 oxidized [2Fe-2S]-[ferredoxin] + S-adenosyl-L-homocysteine. In terms of biological role, specifically methylates position 2 of adenine 2503 in 23S rRNA and position 2 of adenine 37 in tRNAs. m2A2503 modification seems to play a crucial role in the proofreading step occurring at the peptidyl transferase center and thus would serve to optimize ribosomal fidelity. This is Dual-specificity RNA methyltransferase RlmN from Bradyrhizobium sp. (strain ORS 278).